The primary structure comprises 529 residues: MLMLLVRGTRYESLRSKVVLPTPLGGRGTEVLVSESPSPDTGIRWRQSDEALRVNVGGVRRLLSARALARFPGTRLGRLQAAASEEQARRLCDDYDAAAREFYFDRHPGFFLGLLHFYRTGHLHVLDELCVFAFGQEADYWGLGENVLAACCRARYLERRLTQPRAWDEDSDTPSSVDPCPDEISDVQRELARYGAARCGRLRRRLWLTMENPGYSLPSKLFSCVSISVVLASIAAMCIHSLPEYQAREAAAAVAAVAAGRSPEGVRDDPVLRRLEYFCIAWFSFEVSSRLLLAPSTRNFFCHPLNLIDIVSVLPFYLTLLAGVALGDQGGTGGKELGHLGKVVQVFRLMRIFRVLKLARHSTGLRSLGATLKHSYREVGILLLYLAVGVSVFSGVAYTAEKEEDVGFNTIPACWWWGTVSMTTVGYGDVVPVTVAGKLAASGCILGGILVVALPITIIFNKFSHFYRRQKALEAAVRNSNHQEFEDLLSSVDEVSEASLETSREISQEGRSADLETQAPSEPPHPQMY.

The Cytoplasmic portion of the chain corresponds to 1-217; that stretch reads MLMLLVRGTR…LTMENPGYSL (217 aa). A helical transmembrane segment spans residues 218-239; the sequence is PSKLFSCVSISVVLASIAAMCI. Residues 240 to 270 lie on the Extracellular side of the membrane; that stretch reads HSLPEYQAREAAAAVAAVAAGRSPEGVRDDP. The helical transmembrane segment at 271 to 293 threads the bilayer; the sequence is VLRRLEYFCIAWFSFEVSSRLLL. The Cytoplasmic portion of the chain corresponds to 294 to 304; that stretch reads APSTRNFFCHP. Residues 305–322 form a helical membrane-spanning segment; it reads LNLIDIVSVLPFYLTLLA. The Extracellular portion of the chain corresponds to 323-340; that stretch reads GVALGDQGGTGGKELGHL. A helical; Voltage-sensor membrane pass occupies residues 341–361; the sequence is GKVVQVFRLMRIFRVLKLARH. Residues 362-376 lie on the Cytoplasmic side of the membrane; that stretch reads STGLRSLGATLKHSY. A helical membrane pass occupies residues 377-398; that stretch reads REVGILLLYLAVGVSVFSGVAY. Over 399–411 the chain is Extracellular; it reads TAEKEEDVGFNTI. The helical intramembrane region spans 412-423; the sequence is PACWWWGTVSMT. The Selectivity filter signature appears at 424–429; sequence TVGYGD. Residues 424 to 431 lie within the membrane without spanning it; that stretch reads TVGYGDVV. Over 432–438 the chain is Extracellular; the sequence is PVTVAGK. Residues 439-467 form a helical membrane-spanning segment; that stretch reads LAASGCILGGILVVALPITIIFNKFSHFY. At 468-529 the chain is on the cytoplasmic side; that stretch reads RRQKALEAAV…PSEPPHPQMY (62 aa). A disordered region spans residues 500–529; the sequence is LETSREISQEGRSADLETQAPSEPPHPQMY. Positions 502–514 are enriched in basic and acidic residues; sequence TSREISQEGRSAD.

Belongs to the potassium channel family. S (TC 1.A.1.2) subfamily. Kv9.1/KCNS1 sub-subfamily. In terms of assembly, heterotetramer with KCNB1. Heterotetramer with KCNB2. Does not form homomultimers.

The protein resides in the cell membrane. Its function is as follows. Potassium channel regulatory subunit that modulate the delayed rectifier voltage-gated potassium channel activity of KCNB1 and KCNB2 by altering their kinetics, expression levels, and shifting the half-inactivation potential to more polarized values. While it does not form functional channels on its own, it can form functional heterotetrameric channels with KCNB1 and KCNB2. Each regulatory subunit has unique regulatory properties that can lead to extensive inhibition, significant changes in kinetics, and/or substantial shifts in the voltage dependencies of the inactivation process. In Colobus guereza (Mantled guereza), this protein is Delayed-rectifier potassium channel regulatory subunit KCNS1.